Consider the following 193-residue polypeptide: Ion-translocating oxidoreductase complex subunit A (193 aa).

6 helical membrane-spanning segments follow: residues 5 to 25 (FFFILSNILIDNFILVKFLGL), 47 to 67 (FVVVVSTVLLWFVNFFILLPF), 72 to 92 (LRIIVYMLIISFGVQLIEIIL), 102 to 122 (ILGIFLPLITTNCAVLAIPLF), 134 to 154 (ILYAVSASFGFTLVMVIFSSI), and 171 to 191 (PIVLITVSLISIVFMGFKGLV).

This sequence belongs to the NqrDE/RnfAE family. As to quaternary structure, the complex is composed of six subunits: RnfA, RnfB, RnfC, RnfD, RnfE and RnfG.

The protein localises to the cell inner membrane. In terms of biological role, part of a membrane-bound complex that couples electron transfer with translocation of ions across the membrane. The chain is Ion-translocating oxidoreductase complex subunit A from Buchnera aphidicola subsp. Schizaphis graminum (strain Sg).